A 325-amino-acid chain; its full sequence is NADH-quinone oxidoreductase subunit H (325 aa).

A run of 8 helical transmembrane segments spans residues 11–31 (ILLT…CGAF), 81–101 (VIFT…FAIV), 114–134 (IGIL…LFAG), 154–174 (LSYE…AGSF), 186–206 (VWNV…GVAV), 237–257 (FFVG…TLFF), 265–285 (LPPF…FILI), and 304–324 (ICLP…LWQA).

The protein belongs to the complex I subunit 1 family. In terms of assembly, NDH-1 is composed of 13 different subunits. Subunits NuoA, H, J, K, L, M, N constitute the membrane sector of the complex.

It localises to the cell inner membrane. It catalyses the reaction a quinone + NADH + 5 H(+)(in) = a quinol + NAD(+) + 4 H(+)(out). Its function is as follows. NDH-1 shuttles electrons from NADH, via FMN and iron-sulfur (Fe-S) centers, to quinones in the respiratory chain. The immediate electron acceptor for the enzyme in this species is believed to be ubiquinone. Couples the redox reaction to proton translocation (for every two electrons transferred, four hydrogen ions are translocated across the cytoplasmic membrane), and thus conserves the redox energy in a proton gradient. This subunit may bind ubiquinone. In Shigella flexneri serotype 5b (strain 8401), this protein is NADH-quinone oxidoreductase subunit H.